A 180-amino-acid chain; its full sequence is Ribosome-recycling factor (180 aa).

Belongs to the RRF family.

Its subcellular location is the cytoplasm. Responsible for the release of ribosomes from messenger RNA at the termination of protein biosynthesis. May increase the efficiency of translation by recycling ribosomes from one round of translation to another. This Chlamydia felis (strain Fe/C-56) (Chlamydophila felis) protein is Ribosome-recycling factor.